Reading from the N-terminus, the 484-residue chain is Probable cytosol aminopeptidase (484 aa).

Residues K256 and D261 each contribute to the Mn(2+) site. K268 is a catalytic residue. Residues D279, D338, and E340 each coordinate Mn(2+). The active site involves R342.

It belongs to the peptidase M17 family. Mn(2+) is required as a cofactor.

The protein localises to the cytoplasm. It carries out the reaction Release of an N-terminal amino acid, Xaa-|-Yaa-, in which Xaa is preferably Leu, but may be other amino acids including Pro although not Arg or Lys, and Yaa may be Pro. Amino acid amides and methyl esters are also readily hydrolyzed, but rates on arylamides are exceedingly low.. It catalyses the reaction Release of an N-terminal amino acid, preferentially leucine, but not glutamic or aspartic acids.. In terms of biological role, presumably involved in the processing and regular turnover of intracellular proteins. Catalyzes the removal of unsubstituted N-terminal amino acids from various peptides. This chain is Probable cytosol aminopeptidase, found in Methylibium petroleiphilum (strain ATCC BAA-1232 / LMG 22953 / PM1).